Here is a 346-residue protein sequence, read N- to C-terminus: Dihydroorotase (346 aa).

H14 and H16 together coordinate Zn(2+). Substrate contacts are provided by residues H16–R18 and N42. Residues K100, H137, and H175 each coordinate Zn(2+). K100 is subject to N6-carboxylysine. H137 lines the substrate pocket. L220 contacts substrate. A Zn(2+)-binding site is contributed by D248. Residue D248 is part of the active site. Residues H252 and A264 each contribute to the substrate site.

Belongs to the metallo-dependent hydrolases superfamily. DHOase family. Class II DHOase subfamily. As to quaternary structure, homodimer. Zn(2+) serves as cofactor.

The enzyme catalyses (S)-dihydroorotate + H2O = N-carbamoyl-L-aspartate + H(+). It participates in pyrimidine metabolism; UMP biosynthesis via de novo pathway; (S)-dihydroorotate from bicarbonate: step 3/3. In terms of biological role, catalyzes the reversible cyclization of carbamoyl aspartate to dihydroorotate. This chain is Dihydroorotase, found in Novosphingobium aromaticivorans (strain ATCC 700278 / DSM 12444 / CCUG 56034 / CIP 105152 / NBRC 16084 / F199).